Here is a 424-residue protein sequence, read N- to C-terminus: Gamma-glutamyl phosphate reductase (424 aa).

Belongs to the gamma-glutamyl phosphate reductase family.

Its subcellular location is the cytoplasm. The catalysed reaction is L-glutamate 5-semialdehyde + phosphate + NADP(+) = L-glutamyl 5-phosphate + NADPH + H(+). It participates in amino-acid biosynthesis; L-proline biosynthesis; L-glutamate 5-semialdehyde from L-glutamate: step 2/2. Catalyzes the NADPH-dependent reduction of L-glutamate 5-phosphate into L-glutamate 5-semialdehyde and phosphate. The product spontaneously undergoes cyclization to form 1-pyrroline-5-carboxylate. The polypeptide is Gamma-glutamyl phosphate reductase (Dehalococcoides mccartyi (strain ATCC BAA-2100 / JCM 16839 / KCTC 5957 / BAV1)).